The chain runs to 569 residues: MSWKLTKKLKETHLASAIGLNSGGSSFTRGLKNSTLSSTSSRKSSDEKSRKSSEDKRSPQSTVVQPGLLQVTIIEARNLKLPSGHVPANYGVSIDNSLLAPPLSNGSGHARSRSHAWWLPYIVVEFDKNEILVDALNTASLENPCWDYQATFDVSRYSKLSLNIYLRSSSSRSRNGMGNDAFLGGIKLSPSFIVNKLTDEWVPLHGGSGELRVQMLYKPNQSTPLTIDAFELLKVVGKGSFGKVMQVRKRDTSRIYALKTMKKAHIVSRSEVDHTLAERTVLAQVNNPFIVPLKFSFQSPGKLYLVLAFVNGGELFHHLQREGCFDTYRAKFYIAELLVALECLHEFNVIYRDLKPENILLDYTGHIALCDFGLCKLNMAKTDRTNTFCGTPEYLAPELLLGHGYTKVVDWWTLGVLLYEMITGLPPFYDENINEMYRKILQDPLRFPDNIDEKAKDLLSGLLTRAPEKRLGSGGAQEIKNHPFFDDIDWKKLCAKKIQPPFKPSVESAIDTSNFDSEFTSEIPMDSVVADSHLSETVQQRFANWSYQRPTTIDTSDDINTIAPGSVIR.

Residues 19-63 (GLNSGGSSFTRGLKNSTLSSTSSRKSSDEKSRKSSEDKRSPQSTV) are disordered. Residues 31–42 (LKNSTLSSTSSR) are compositionally biased toward low complexity. Residues 43 to 58 (KSSDEKSRKSSEDKRS) are compositionally biased toward basic and acidic residues. Residues 45–202 (SDEKSRKSSE…IVNKLTDEWV (158 aa)) enclose the C2 domain. A Protein kinase domain is found at 230 to 485 (FELLKVVGKG…AQEIKNHPFF (256 aa)). ATP contacts are provided by residues 236–244 (VGKGSFGKV) and Lys259. Asp353 functions as the Proton acceptor in the catalytic mechanism. Thr387 carries the phosphothreonine; by ksg1 modification. The AGC-kinase C-terminal domain occupies 486–557 (DDIDWKKLCA…QRPTTIDTSD (72 aa)). Ser527 and Ser546 each carry phosphoserine; by TORC2.

Belongs to the protein kinase superfamily. AGC Ser/Thr protein kinase family. Phosphorylated by ksg1 and target of rapamycin complex 2 (TORC2), affecting the kinase activity of gad8 in a nutrient-dependent manner.

The enzyme catalyses L-seryl-[protein] + ATP = O-phospho-L-seryl-[protein] + ADP + H(+). It catalyses the reaction L-threonyl-[protein] + ATP = O-phospho-L-threonyl-[protein] + ADP + H(+). Functionally, involved in a signaling module for sexual development and cell growth under stressed conditions. Required for G1 arrest under nitrogen starvation and for growth at high temperature and osmolarity. In Schizosaccharomyces pombe (strain 972 / ATCC 24843) (Fission yeast), this protein is Serine/threonine-protein kinase gad8.